The chain runs to 75 residues: Large ribosomal subunit protein bL31 (75 aa).

It belongs to the bacterial ribosomal protein bL31 family. Type A subfamily. As to quaternary structure, part of the 50S ribosomal subunit.

Its function is as follows. Binds the 23S rRNA. The chain is Large ribosomal subunit protein bL31 from Chlorobium luteolum (strain DSM 273 / BCRC 81028 / 2530) (Pelodictyon luteolum).